We begin with the raw amino-acid sequence, 229 residues long: MQNSSRHQQKKRNKKPGPELPLALWIHIAESINGDSSWYITMRLQQMMWGKRGNKLQYKNEDREYENWEITSWGWKMHLRRVKQWIQDNRRGSPWQYKVGGTWKSIGVWFLQAGDYRKVDRHFWWAWRILICSCRKEKFDIREFMRGRHRWDLCKSCAQGEVVKHTRTKSLERLVLLQMVEQHVFQVLPLWRARRSSTTDFPWCRDTTGYTHAWSVQECWLMEYLLEDE.

The protein resides in the host cytoplasm. It localises to the virion. In terms of biological role, determines virus infectivity. The polypeptide is Virion infectivity factor (vif) (Caprine arthritis encephalitis virus (strain Cork) (CAEV-Co)).